Here is a 320-residue protein sequence, read N- to C-terminus: N-acetylneuraminate lyase (320 aa).

The aceneuramate site is built by threonine 51 and threonine 52. Tyrosine 143 (proton donor) is an active-site residue. Lysine 173 serves as the catalytic Schiff-base intermediate with substrate. Aceneuramate is bound by residues threonine 175, glycine 199, aspartate 201, glutamate 202, and serine 218. Position 308 is a phosphoserine (serine 308).

This sequence belongs to the DapA family. NanA subfamily. In terms of assembly, homotetramer.

It is found in the cytoplasm. The catalysed reaction is aceneuramate = aldehydo-N-acetyl-D-mannosamine + pyruvate. It functions in the pathway amino-sugar metabolism; N-acetylneuraminate degradation. Functionally, catalyzes the cleavage of N-acetylneuraminic acid (sialic acid) to form pyruvate and N-acetylmannosamine via a Schiff base intermediate. It prevents sialic acids from being recycled and returning to the cell surface. Involved in the N-glycolylneuraminic acid (Neu5Gc) degradation pathway. This is N-acetylneuraminate lyase from Mus musculus (Mouse).